The sequence spans 122 residues: MADSVHFPWMPFPPRFLVCTRDDIYEDENGRQWVVAKVETSRSPYGSRIETCITVHLQHMTTIPQEPTPQQPINNNSLPTMWRLESMNTYTGTDGTYWRLLDHSQMGDTLQLILDIVICEVD.

The protein belongs to the TCL1 family.

This Mus musculus (Mouse) protein is Protein TCL1B3 (Tcl1b3).